The following is a 228-amino-acid chain: Protein N-lysine methyltransferase METTL21D (228 aa).

Position 2 is an N-acetylalanine (A2). Residues W43, 75–77 (GSG), D96, W126, A142, and Y147 each bind S-adenosyl-L-methionine.

This sequence belongs to the methyltransferase superfamily. METTL21 family. In terms of assembly, interacts with ALKBH6. Interacts with ASPSCR1 and UBXN6; interaction with ASPSCR1, but not with UBXN6, enhances VCP methylation. As to expression, widely expressed.

It localises to the cytoplasm. It catalyses the reaction L-lysyl-[protein] + 3 S-adenosyl-L-methionine = N(6),N(6),N(6)-trimethyl-L-lysyl-[protein] + 3 S-adenosyl-L-homocysteine + 3 H(+). Protein N-lysine methyltransferase that specifically trimethylates 'Lys-315' of VCP/p97; this modification may decrease VCP ATPase activity. In Mus musculus (Mouse), this protein is Protein N-lysine methyltransferase METTL21D (Vcpkmt).